The primary structure comprises 338 residues: MSVSGLPFDDFRTLLRELPGPDARALAAARERDAQLTKPPGALGRLEEIAFWLAAWTGRAPAVNRPLVAIFAGNHGVTRHGITPFPPAVTQQMVENFAAGGAAINQICVAHDLGLKVFDLALDYPTGDITEEAALSERDCAATMAFGMEAIAGGTDLLCIGEMGIGNTTIAAAINYALYGGSARDWVGPGTGSEGDMLERKIAAVEKAVALHSDHLDDPLEIMRRLGGREIAAMAGAILAARIERIPVLIDGYVATAAAAILKAANPAALDHCLIGHVSAEPGHLRSIEMLGKTPLLALGMRLGEGTGAALAAGIVKAAAACHSGMATFAQAGVSGKH.

E305 serves as the catalytic Proton acceptor.

The protein belongs to the CobT family.

The catalysed reaction is 5,6-dimethylbenzimidazole + nicotinate beta-D-ribonucleotide = alpha-ribazole 5'-phosphate + nicotinate + H(+). The protein operates within nucleoside biosynthesis; alpha-ribazole biosynthesis; alpha-ribazole from 5,6-dimethylbenzimidazole: step 1/2. Functionally, catalyzes the synthesis of alpha-ribazole-5'-phosphate from nicotinate mononucleotide (NAMN) and 5,6-dimethylbenzimidazole (DMB). The chain is Nicotinate-nucleotide--dimethylbenzimidazole phosphoribosyltransferase from Rhizobium etli (strain ATCC 51251 / DSM 11541 / JCM 21823 / NBRC 15573 / CFN 42).